The chain runs to 676 residues: Rho guanine nucleotide exchange factor 37 (676 aa).

The tract at residues 1–26 (MADFETDEASSKSESPEQEGQGSEDK) is disordered. The DH domain maps to 30 to 213 (HQRLAIRELI…QDVNSNINEY (184 aa)). In terms of domain architecture, BAR spans 254 to 455 (LKQEAGLVPR…LPHRHVSEPD (202 aa)). SH3 domains lie at 506 to 569 (GPGK…LYHP) and 603 to 666 (PTMS…RTPS). Disordered regions lie at residues 568–601 (HPIN…SVPT) and 657–676 (PSNF…NLPS).

In terms of biological role, may act as a guanine nucleotide exchange factor (GEF). The chain is Rho guanine nucleotide exchange factor 37 (Arhgef37) from Rattus norvegicus (Rat).